The primary structure comprises 210 residues: Cytochrome c biogenesis ATP-binding export protein CcmA (210 aa).

The ABC transporter domain maps to 3-209 (LTVTNLACAR…PADDPFAGVT (207 aa)). 35–42 (GPNGIGKT) is an ATP binding site.

The protein belongs to the ABC transporter superfamily. CcmA exporter (TC 3.A.1.107) family. As to quaternary structure, the complex is composed of two ATP-binding proteins (CcmA) and two transmembrane proteins (CcmB).

It localises to the cell inner membrane. The catalysed reaction is heme b(in) + ATP + H2O = heme b(out) + ADP + phosphate + H(+). Part of the ABC transporter complex CcmAB involved in the biogenesis of c-type cytochromes; once thought to export heme, this seems not to be the case, but its exact role is uncertain. Responsible for energy coupling to the transport system. The protein is Cytochrome c biogenesis ATP-binding export protein CcmA of Cereibacter sphaeroides (strain ATCC 17023 / DSM 158 / JCM 6121 / CCUG 31486 / LMG 2827 / NBRC 12203 / NCIMB 8253 / ATH 2.4.1.) (Rhodobacter sphaeroides).